A 362-amino-acid polypeptide reads, in one-letter code: MERIVVTLGERSYPITIASGLFNEPASFLPLKSGEQVMLVTNETLAPLYLDKVRGVLEQAGVNVDSVILPDGEQYKSLAVLDTVFTALLQKPHGRDTTLVALGGGVVGDLTGFAAASYQRGVRFIQVPTTLLSQVDSSVGGKTAVNHPLGKNMIGAFYQPASVVVDLDCLKTLPPRELASGLAEVIKYGIILDGAFFNWLEENLDALLRLDGPAMAYCIRRCCELKAEVVAADERETGLRALLNLGHTFGHAIEAEMGYGNWLHGEAVAAGMVMAARTSERLGQFSSAETQRIITLLKRAGLPVNGPREMSAQAYLPHMLRDKKVLAGEMRLILPLAIGKSEVRSGVSHELVLNAIADCQSA.

NAD(+)-binding positions include 71 to 76, 105 to 109, 129 to 130, Lys-142, Lys-151, and 169 to 172; these read DGEQYK, GVVGD, TT, and CLKT. Residues Glu-184, His-247, and His-264 each coordinate Zn(2+).

This sequence belongs to the sugar phosphate cyclases superfamily. Dehydroquinate synthase family. Co(2+) is required as a cofactor. The cofactor is Zn(2+). It depends on NAD(+) as a cofactor.

Its subcellular location is the cytoplasm. It carries out the reaction 7-phospho-2-dehydro-3-deoxy-D-arabino-heptonate = 3-dehydroquinate + phosphate. The protein operates within metabolic intermediate biosynthesis; chorismate biosynthesis; chorismate from D-erythrose 4-phosphate and phosphoenolpyruvate: step 2/7. Functionally, catalyzes the conversion of 3-deoxy-D-arabino-heptulosonate 7-phosphate (DAHP) to dehydroquinate (DHQ). The protein is 3-dehydroquinate synthase of Escherichia coli (strain K12 / MC4100 / BW2952).